We begin with the raw amino-acid sequence, 473 residues long: Phosphatidylserine synthase 1 (473 aa).

At Ala-2 the chain carries N-acetylalanine. Topologically, residues 2–35 are cytoplasmic; that stretch reads ASCVGSRTLSKDDVNYRMHFRMINEQQVEDITID. Residues 36 to 56 form a helical membrane-spanning segment; it reads FFYRPHTITLLSFTIISLMYF. The Lumenal portion of the chain corresponds to 57–72; sequence AFTRDDCVPEDNIWRG. A helical membrane pass occupies residues 73-93; that stretch reads ILSVIFFFLIISVLAFPNGPF. The Cytoplasmic segment spans residues 94–102; the sequence is TRPHPALWR. The helical transmembrane segment at 103-123 threads the bilayer; sequence MVFGLSVLYFLFLVFLLFLNF. Topologically, residues 124–186 are lumenal; the sequence is EQVKSLMYWL…AMKALLIRSY (63 aa). Residues 187–207 form a helical membrane-spanning segment; it reads GLCWTISITWELTELFFMHLL. Over 208–216 the chain is Cytoplasmic; that stretch reads PNFAECWWD. The chain crosses the membrane as a helical span at residues 217 to 237; sequence QVILDILLCNGGGIWLGMVVC. Residues 238–286 lie on the Lumenal side of the membrane; it reads RFLEMRTYHWASFKDIHTTTGKIKRAVLQFTPASWTYVRWFDPKSSFQR. Residues 287–307 form a helical membrane-spanning segment; the sequence is VAGIYLFMIIWQLTELNTFFL. The Cytoplasmic portion of the chain corresponds to 308–319; the sequence is KHIFVFQASHPL. Residues 320–342 traverse the membrane as a helical segment; the sequence is SWCRILFIGCITAPTVRQYYAYL. The Lumenal segment spans residues 343–355; sequence TDTQCKRVGTQCW. The chain crosses the membrane as a helical span at residues 356-376; that stretch reads VFGVIGFLEAIVCIKFGQDLF. Residues 377–383 are Cytoplasmic-facing; it reads SKTQILY. The chain crosses the membrane as a helical span at residues 384–404; the sequence is VVLWLLCVAFTTFLCLYGMVW. Over 405-473 the chain is Lumenal; sequence YAEHYGHREK…SKVTNGVGKK (69 aa). Residues Ser-417, Ser-425, Ser-442, and Ser-454 each carry the phosphoserine modification. Residues 430–473 are disordered; sequence WYHGKGSKGSEDSPPKHSNNNESHSSRRRNRHSKSKVTNGVGKK. Residues 455–464 are compositionally biased toward basic residues; that stretch reads SRRRNRHSKS.

This sequence belongs to the phosphatidyl serine synthase family.

It is found in the endoplasmic reticulum membrane. The catalysed reaction is a 1,2-diacyl-sn-glycero-3-phosphoethanolamine + L-serine = a 1,2-diacyl-sn-glycero-3-phospho-L-serine + ethanolamine. The enzyme catalyses a 1,2-diacyl-sn-glycero-3-phosphocholine + L-serine = a 1,2-diacyl-sn-glycero-3-phospho-L-serine + choline. Its pathway is phospholipid metabolism; phosphatidylserine biosynthesis. Functionally, catalyzes a base-exchange reaction in which the polar head group of phosphatidylethanolamine (PE) or phosphatidylcholine (PC) is replaced by L-serine. Catalyzes mainly the conversion of phosphatidylcholine but also converts, in vitro and to a lesser extent, phosphatidylethanolamine. This chain is Phosphatidylserine synthase 1 (Ptdss1), found in Rattus norvegicus (Rat).